A 323-amino-acid chain; its full sequence is MSSLPPAIFLMGPTAAGKTDLAMALADALPCELISVDSALIYRGMDIGTAKPSRELLARYPHRLIDIRDPAESYSAAEFRADALAAMAKATARGRIPLLVGGTMLYYKALLEGLADMPGADPEVRAAIEAEAQAEGWEALHRQLAEVDPESAARIHPNDPQRLMRALEVYRLGGVSMSDLRRRQSAEKADFDASGRNQLPYTVAQLAIAPEQRQVLHARIAQRFRQMLEQGFIAEVEALHARSDLHAGLPSIRAVGYRQVWDYLDGKLSYAEMTERGIIATRQLAKRQFTWLRSWSHLHWMDSLAGDNLPRALKYLKTVSILA.

Position 12 to 19 (12 to 19 (GPTAAGKT)) interacts with ATP. Position 14-19 (14-19 (TAAGKT)) interacts with substrate. Interaction with substrate tRNA stretches follow at residues 37 to 40 (DSAL) and 161 to 165 (QRLMR).

This sequence belongs to the IPP transferase family. Monomer. Mg(2+) serves as cofactor.

The enzyme catalyses adenosine(37) in tRNA + dimethylallyl diphosphate = N(6)-dimethylallyladenosine(37) in tRNA + diphosphate. In terms of biological role, catalyzes the transfer of a dimethylallyl group onto the adenine at position 37 in tRNAs that read codons beginning with uridine, leading to the formation of N6-(dimethylallyl)adenosine (i(6)A). This is tRNA dimethylallyltransferase from Pseudomonas aeruginosa (strain LESB58).